A 284-amino-acid polypeptide reads, in one-letter code: tRNA uridine(34) hydroxylase (284 aa).

Residues 132–226 (AGRPVVMLDT…YFEEVGGAHY (95 aa)) enclose the Rhodanese domain. The active-site Cysteine persulfide intermediate is Cys186.

This sequence belongs to the TrhO family.

The enzyme catalyses uridine(34) in tRNA + AH2 + O2 = 5-hydroxyuridine(34) in tRNA + A + H2O. Catalyzes oxygen-dependent 5-hydroxyuridine (ho5U) modification at position 34 in tRNAs. This chain is tRNA uridine(34) hydroxylase, found in Burkholderia ambifaria (strain MC40-6).